We begin with the raw amino-acid sequence, 305 residues long: Ribosomal RNA small subunit methyltransferase H (305 aa).

S-adenosyl-L-methionine contacts are provided by residues G30–H32, D49, F74, D96, and Q103.

This sequence belongs to the methyltransferase superfamily. RsmH family.

Its subcellular location is the cytoplasm. It carries out the reaction cytidine(1402) in 16S rRNA + S-adenosyl-L-methionine = N(4)-methylcytidine(1402) in 16S rRNA + S-adenosyl-L-homocysteine + H(+). Specifically methylates the N4 position of cytidine in position 1402 (C1402) of 16S rRNA. The polypeptide is Ribosomal RNA small subunit methyltransferase H (Francisella tularensis subsp. holarctica (strain LVS)).